A 388-amino-acid chain; its full sequence is AdoMet-dependent heme synthase (388 aa).

Positions 1 to 12 are enriched in low complexity; it reads MHNANHPHGNGH. The segment at 1-29 is disordered; it reads MHNANHPHGNGHPAEKKGMGAHSGAMNMP. The Radical SAM core domain occupies 34–257; the sequence is DGSPACRLIA…TSMHLKATCA (224 aa). Cysteine 50, cysteine 54, and cysteine 57 together coordinate [4Fe-4S] cluster.

Belongs to the radical SAM superfamily. It depends on [4Fe-4S] cluster as a cofactor.

It carries out the reaction Fe-coproporphyrin III + 2 S-adenosyl-L-methionine = heme b + 2 5'-deoxyadenosine + 2 L-methionine + 2 CO2. It participates in porphyrin-containing compound metabolism; protoheme biosynthesis. Involved in siroheme-dependent heme b biosynthesis. Catalyzes the conversion of Fe-coproporphyrin III into heme by the oxidative decarboxylation of two propionate side chains. This Oleidesulfovibrio alaskensis (strain ATCC BAA-1058 / DSM 17464 / G20) (Desulfovibrio alaskensis) protein is AdoMet-dependent heme synthase.